The primary structure comprises 764 residues: Protein translocase subunit SecA 2 (764 aa).

Residues Gln-83, 101–105 (GEGKT), and Asp-490 contribute to the ATP site.

It belongs to the SecA family. Monomer and homodimer. Part of the essential Sec protein translocation apparatus which comprises SecA, SecYEG and auxiliary proteins SecDF. Other proteins may also be involved.

The protein localises to the cell membrane. It is found in the cytoplasm. The catalysed reaction is ATP + H2O + cellular proteinSide 1 = ADP + phosphate + cellular proteinSide 2.. Its function is as follows. Part of the Sec protein translocase complex. Interacts with the SecYEG preprotein conducting channel. Has a central role in coupling the hydrolysis of ATP to the transfer of proteins into and across the cell membrane, serving as an ATP-driven molecular motor driving the stepwise translocation of polypeptide chains across the membrane. This is Protein translocase subunit SecA 2 from Corynebacterium diphtheriae (strain ATCC 700971 / NCTC 13129 / Biotype gravis).